The chain runs to 379 residues: Cyclic di-GMP phosphodiesterase PdeB (379 aa).

In terms of domain architecture, HD-GYP spans 114 to 310; the sequence is FYKKQKKIFI…PLDFIVELND (197 aa).

It depends on Mn(2+) as a cofactor.

The enzyme catalyses 3',3'-c-di-GMP + 2 H2O = 2 GMP + 2 H(+). In terms of biological role, phosphodiesterase (PDE) that catalyzes the hydrolysis of cyclic diguanylate (c-di-GMP) to GMP. This is Cyclic di-GMP phosphodiesterase PdeB from Borreliella burgdorferi (strain ATCC 35210 / DSM 4680 / CIP 102532 / B31) (Borrelia burgdorferi).